The sequence spans 311 residues: Dihydroorotate dehydrogenase B (NAD(+)), catalytic subunit (311 aa).

Residues serine 24 and 48-49 contribute to the FMN site; that span reads KA. Substrate contacts are provided by residues lysine 48 and 72-76; that span reads NAIGL. Residues asparagine 104 and asparagine 132 each contribute to the FMN site. Asparagine 132 provides a ligand contact to substrate. Cysteine 135 functions as the Nucleophile in the catalytic mechanism. The FMN site is built by lysine 170 and isoleucine 196. 197–198 is a binding site for substrate; it reads NT. Residues glycine 222, 248-249, and 270-271 each bind FMN; these read GG and GT.

Belongs to the dihydroorotate dehydrogenase family. Type 1 subfamily. As to quaternary structure, heterotetramer of 2 PyrK and 2 PyrD type B subunits. Requires FMN as cofactor.

It is found in the cytoplasm. The catalysed reaction is (S)-dihydroorotate + NAD(+) = orotate + NADH + H(+). It participates in pyrimidine metabolism; UMP biosynthesis via de novo pathway; orotate from (S)-dihydroorotate (NAD(+) route): step 1/1. In terms of biological role, catalyzes the conversion of dihydroorotate to orotate with NAD(+) as electron acceptor. This is Dihydroorotate dehydrogenase B (NAD(+)), catalytic subunit (pyrDB) from Lactococcus lactis subsp. lactis (strain IL1403) (Streptococcus lactis).